The following is an 856-amino-acid chain: Vomeronasal type-2 receptor 116 (856 aa).

The N-terminal stretch at 1–18 (MFTLIFLFLFLNIPLLVA) is a signal peptide. The Extracellular segment spans residues 19-586 (DFISPRCFWK…VFLSYEEPLG (568 aa)). N-linked (GlcNAc...) asparagine glycosylation is present at Asn-94. A helical transmembrane segment spans residues 587-607 (VALSLLSLCFSAFTTVVLGIF). Topologically, residues 608 to 622 (VKHHNTPIVKANNRT) are cytoplasmic. Residues 623 to 643 (LTYLLLISLIFCFLCPLLFIG) form a helical membrane-spanning segment. Residues 644–658 (HPNSATCILQQLTFG) are Extracellular-facing. A helical transmembrane segment spans residues 659 to 679 (VVFTVSLSTVLAKTITVVLAF). At 680–690 (KIIASQRMMKY) the chain is on the cytoplasmic side. The chain crosses the membrane as a helical span at residues 691–711 (FLISGAINYIIPICILIQVIV). The Extracellular portion of the chain corresponds to 712–745 (CAVWLRASPPSVDIDAHSEHGQIIIVCHKGSVNA). A helical transmembrane segment spans residues 746 to 766 (FYCVLGYLAILAFGSFTLAFL). At 767-778 (SRNLPGAFNEAK) the chain is on the cytoplasmic side. The chain crosses the membrane as a helical span at residues 779–799 (SITFSMLVFCSVWVTFIPVYH). Residues 800–806 (STKGKVM) lie on the Extracellular side of the membrane. Residues 807–827 (VAVEIFSTLASSAGMLGCIFV) traverse the membrane as a helical segment. The Cytoplasmic portion of the chain corresponds to 828–856 (PKCYTILFRQDQNSLEMIRVKSSSNVHVS).

It belongs to the G-protein coupled receptor 3 family. As to expression, expressed in the vomeronasal organ.

The protein localises to the cell membrane. Functionally, receptor for the Esp1 pheromone. Mediates the response to Esp1 which enhances female sexual receptive behavior (lordosis) upon male mounting, resulting in successful copulation. In Mus musculus (Mouse), this protein is Vomeronasal type-2 receptor 116.